The following is a 274-amino-acid chain: Large ribosomal subunit protein uL2 (274 aa).

Disordered regions lie at residues 28–53 and 221–274; these read KPYAPLLEKNSKSGGRNNNGRITTRH and RGTA…RTKK. The segment covering 39 to 48 has biased composition (low complexity); that stretch reads KSGGRNNNGR. Residues 253–274 are compositionally biased toward basic residues; the sequence is KGKKTRKNKRTEHFIVHRRTKK.

It belongs to the universal ribosomal protein uL2 family. Part of the 50S ribosomal subunit. Forms a bridge to the 30S subunit in the 70S ribosome.

Its function is as follows. One of the primary rRNA binding proteins. Required for association of the 30S and 50S subunits to form the 70S ribosome, for tRNA binding and peptide bond formation. It has been suggested to have peptidyltransferase activity; this is somewhat controversial. Makes several contacts with the 16S rRNA in the 70S ribosome. The polypeptide is Large ribosomal subunit protein uL2 (Proteus mirabilis (strain HI4320)).